Consider the following 299-residue polypeptide: Apolipoprotein E (299 aa).

The first 18 residues, 1 to 18 (MKVLCTVLVVTLLAGCRA), serve as a signal peptide directing secretion. 7 consecutive repeat copies span residues 74–95 (VLME…QELV), 96–117 (PMAE…ARLG), 118–139 (ADME…AMLG), 140–161 (QSAD…KRML), 162–183 (RDAE…EGAE), 184–205 (RGVS…VRAA), and 224–245 (GRLE…EQME). The tract at residues 74–245 (VLMEDTMKAV…RLEEMREQME (172 aa)) is 8 X 22 AA approximate tandem repeats. Met-137 carries the methionine sulfoxide modification. Ser-141 carries the post-translational modification Phosphoserine. The segment at 152 to 162 (HLRKLRKRMLR) is LDL and other lipoprotein receptors binding. 156 to 159 (LRKR) contributes to the heparin binding site. The lipid-binding and lipoprotein association stretch occupies residues 204-273 (AALTGQPLQE…GWFEPMVEDM (70 aa)). 219–226 (GKQLRGRL) lines the heparin pocket. The segment at 261-273 (RLKGWFEPMVEDM) is specificity for association with VLDL.

It belongs to the apolipoprotein A1/A4/E family. In terms of assembly, homotetramer. May interact with ABCA1; functionally associated with ABCA1 in the biogenesis of HDLs. May interact with APP/A4 amyloid-beta peptide; the interaction is extremely stable in vitro but its physiological significance is unclear. May interact with MAPT. May interact with MAP2. In the cerebrospinal fluid, interacts with secreted SORL1. Interacts with PMEL; this allows the loading of PMEL luminal fragment on ILVs to induce fibril nucleation. Post-translationally, APOE exists as multiple glycosylated and sialylated glycoforms within cells and in plasma. The extent of glycosylation and sialylation are tissue and context specific. Glycated in plasma VLDL. In terms of processing, phosphorylated by FAM20C in the extracellular medium.

Its subcellular location is the secreted. The protein resides in the extracellular space. The protein localises to the extracellular matrix. It is found in the extracellular vesicle. It localises to the endosome. Its subcellular location is the multivesicular body. Functionally, APOE is an apolipoprotein, a protein associating with lipid particles, that mainly functions in lipoprotein-mediated lipid transport between organs via the plasma and interstitial fluids. APOE is a core component of plasma lipoproteins and is involved in their production, conversion and clearance. Apolipoproteins are amphipathic molecules that interact both with lipids of the lipoprotein particle core and the aqueous environment of the plasma. As such, APOE associates with chylomicrons, chylomicron remnants, very low density lipoproteins (VLDL) and intermediate density lipoproteins (IDL) but shows a preferential binding to high-density lipoproteins (HDL). It also binds a wide range of cellular receptors including the LDL receptor/LDLR, the LDL receptor-related proteins LRP1, LRP2 and LRP8 and the very low-density lipoprotein receptor/VLDLR that mediate the cellular uptake of the APOE-containing lipoprotein particles. Finally, APOE also has a heparin-binding activity and binds heparan-sulfate proteoglycans on the surface of cells, a property that supports the capture and the receptor-mediated uptake of APOE-containing lipoproteins by cells. A main function of APOE is to mediate lipoprotein clearance through the uptake of chylomicrons, VLDLs, and HDLs by hepatocytes. APOE is also involved in the biosynthesis by the liver of VLDLs as well as their uptake by peripheral tissues ensuring the delivery of triglycerides and energy storage in muscle, heart and adipose tissues. By participating in the lipoprotein-mediated distribution of lipids among tissues, APOE plays a critical role in plasma and tissues lipid homeostasis. APOE is also involved in two steps of reverse cholesterol transport, the HDLs-mediated transport of cholesterol from peripheral tissues to the liver, and thereby plays an important role in cholesterol homeostasis. First, it is functionally associated with ABCA1 in the biogenesis of HDLs in tissues. Second, it is enriched in circulating HDLs and mediates their uptake by hepatocytes. APOE also plays an important role in lipid transport in the central nervous system, regulating neuron survival and sprouting. The protein is Apolipoprotein E (APOE) of Octodon degus (Degu).